A 215-amino-acid polypeptide reads, in one-letter code: Protein HP-25 homolog 2 (215 aa).

An N-terminal signal peptide occupies residues 1–30 (MPGRGGQSLSMVCVDVWILALSVLSVMADA). A disordered region spans residues 35 to 79 (VTESCDSQGPPGLPGPPGLPGPPGPPGPPGPPGLRGPTGIPGDIE). Residues 43–76 (GPPGLPGPPGLPGPPGPPGPPGPPGLRGPTGIPG) enclose the Collagen-like domain. A compositionally biased stretch (pro residues) spans 45-68 (PGLPGPPGLPGPPGPPGPPGPPGL). In terms of domain architecture, C1q spans 82–215 (LSPPKSAFAV…GYLLYGNYPG (134 aa)).

The protein resides in the secreted. The protein is Protein HP-25 homolog 2 of Bos taurus (Bovine).